A 272-amino-acid polypeptide reads, in one-letter code: Transcription factor GAL1 (272 aa).

The span at 1 to 10 shows a compositional bias: polar residues; the sequence is MAGKNMSSRL. Disordered regions lie at residues 1–49, 102–215, and 246–272; these read MAGK…SPET, YGAI…SRDI, and KGHL…AMDY. 2 stretches are compositionally biased toward acidic residues: residues 113 to 122 and 152 to 174; these read ESDDDQDEEQ and SEQD…DEAE. A compositionally biased stretch (basic and acidic residues) spans 175-215; that stretch reads LLIKAERKEAAAKLRAERKAQRKADEVKSKQMAERRRSRDI. The segment at 240–255 adopts a CCHC-type zinc-finger fold; sequence CHVCGQKGHLQKDCPD.

The protein localises to the nucleus. Its function is as follows. Transcription factor; part of the gene cluster that mediates the biosynthesis of liamocins, glycolipids (also called heavy oils) composed of a single mannitol or arabitol headgroup linked to either three, four or even six 3,5-dihydroxydecanoic ester tail-groups. Positively regulates the expression of PKS1 and EST1 that mediate the biosynthesis of liamocins. The sequence is that of Transcription factor GAL1 from Aureobasidium melanogenum (Aureobasidium pullulans var. melanogenum).